A 1059-amino-acid polypeptide reads, in one-letter code: MDRNEGGDFPINTPNNINSSGGSYNNSMNNSSNNIGRDIGNNQSSRNLKPKPSQSNLKWIARDLKKKSVRKDSERKLKSSGVLKKKNTVMDFGEDDGGSGDDGNITEGLPISEGMDDLPSSSNSRGGSGNDEQKKQFPKEMNSPSSEYGTTSGGQRFDTLVDPDISLAEMEEKMRQHKVYQEQQQQQQQQQQQQKQKDKELSSQKKKPSSMQLSKKKHVAKEDSETLETIIGEEKKEVVFEVKPYFSHAILQATMAVFLIWNIFYFAYRAGWTMNRTDYITFSYSILFIIVEFISFLGSALHLNNFTNPCTFVLVVTLEQILAKRRKKHPTVMMYVCTYKEPPSIVSRTFRTAISMDYPSENLWIGLLDDSVNYRESRGWAHLQSVEKNFLYVLLQKAVYSVHNIRPPVTSQHEDPHGILNETSSKIESSTKEVIEAEVQWFIEYFLLNSWFGVGQEIPRDADDAERALIAKLRDDNFSPYRTFTKSESEKISNFTIDSLQSLWHGSAFFRPLIRSILLKKDYVRNFVSELNNQHRLRFLNTEALAMAQYQVLMMGRQELPWDEISSGNVRIDFDTCDGPIVSPKCTYLRRRKPPIPHNKAGNINNALFNESTKADYEFLGLLDADQQPHPDFLKRVLPYFYSDEGQDLAFVQTPQFFSNIYPVDDPLGHRNMEFYGPVMEGRSANNACPFVGTNAIFRRQPLYDIGGIMYNSVTEDMYTGMKLQVSGYKSWYHNEVLVVGTAPVDLKETLEQRKRWAQGAVEIFSLTPWGYIRGKLGWRKMLYNLDSCIYPFLSPTAFFYGASPLIMSIWTVPIVVKDPIIFILVGMIPVMVLPRVIQYMILRAKRPYEAGKSGPSLWVEATDLWRAEQTFFGFAGTYISSWREGSASIVKLLKARKISRHKLAMWNWKRDFVKKPVVCEVFRQTKLVNENDNAQESSGKHKAEQSFRTSNKESDTIKNSRLFLPNIILFVVNILAMMSAVLRFNCFQNDMWLLVVVAGFSFSTLWHLWSFIPMALRQSEKQWPYASSYHAHNIVLFLVLGFLVLLFVDVKVCIPRVG.

2 disordered regions span residues 1–159 and 174–220; these read MDRN…RFDT and MRQH…KHVA. Residues 15–36 are compositionally biased toward low complexity; the sequence is NNINSSGGSYNNSMNNSSNNIG. Composition is skewed to polar residues over residues 40-57 and 142-154; these read GNNQ…QSNL and NSPS…TSGG. The segment covering 181–194 has biased composition (low complexity); it reads QEQQQQQQQQQQQQ. Basic residues predominate over residues 204–219; sequence QKKKPSSMQLSKKKHV. 3 consecutive transmembrane segments (helical) span residues 246 to 266, 280 to 300, and 306 to 323; these read FSHA…IFYF, ITFS…LGSA, and FTNP…QILA. Positions 328-628 are catalytic subdomain A; the sequence is KHPTVMMYVC…FLGLLDADQQ (301 aa). The active site involves D370. Substrate-binding residues include D624 and D626. The catalytic subdomain B stretch occupies residues 701–761; that stretch reads QPLYDIGGIM…EQRKRWAQGA (61 aa). Residue D717 is part of the active site. A run of 2 helical transmembrane segments spans residues 790-810 and 813-833; these read IYPF…IMSI and VPIV…PVMV. The segment at 933 to 953 is disordered; it reads DNAQESSGKHKAEQSFRTSNK. Positions 939–953 are enriched in basic and acidic residues; sequence SGKHKAEQSFRTSNK. Helical transmembrane passes span 963–983, 993–1013, and 1035–1055; these read LFLP…SAVL, WLLV…WSFI, and IVLF…KVCI.

It belongs to the glycosyltransferase 2 family. The cofactor is Mg(2+).

The protein localises to the membrane. The enzyme catalyses [(1-&gt;4)-beta-D-glucosyl](n) + UDP-alpha-D-glucose = [(1-&gt;4)-beta-D-glucosyl](n+1) + UDP + H(+). The protein operates within glycan metabolism; amoeba cellulose biosynthesis. Functionally, catalytic subunit of cellulose synthase. It incorporates glucose from uridine 5'-diphosphate glucose (UDP-alpha-D-glucose) to cellulose (a (1-&gt;4)-beta-D-glucan), which is produced as an extracellular component for mechanical and chemical protection at the onset of the stalk formation, when the cells exhibit multicellular behavior during culmination. This chain is Cellulose synthase catalytic subunit A [UDP-forming] (dcsA), found in Dictyostelium discoideum (Social amoeba).